A 104-amino-acid chain; its full sequence is Cell cycle protein GpsB (104 aa).

Residues 34–72 are a coiled coil; sequence LDVVIQDYEVFQKKIERLEQEIHQLRTEAKRAASERQTR. The span at 60-71 shows a compositional bias: basic and acidic residues; the sequence is TEAKRAASERQT. Residues 60-82 form a disordered region; the sequence is TEAKRAASERQTRHQTSPSVGST. Polar residues predominate over residues 73 to 82; that stretch reads HQTSPSVGST.

It belongs to the GpsB family. In terms of assembly, forms polymers through the coiled coil domains. Interacts with PBP1, MreC and EzrA.

It localises to the cytoplasm. Divisome component that associates with the complex late in its assembly, after the Z-ring is formed, and is dependent on DivIC and PBP2B for its recruitment to the divisome. Together with EzrA, is a key component of the system that regulates PBP1 localization during cell cycle progression. Its main role could be the removal of PBP1 from the cell pole after pole maturation is completed. Also contributes to the recruitment of PBP1 to the division complex. Not essential for septum formation. The sequence is that of Cell cycle protein GpsB from Halalkalibacterium halodurans (strain ATCC BAA-125 / DSM 18197 / FERM 7344 / JCM 9153 / C-125) (Bacillus halodurans).